A 591-amino-acid polypeptide reads, in one-letter code: Probable Xaa-Pro aminopeptidase PEPP (591 aa).

The disordered stretch occupies residues 31–59; that stretch reads SIHSPPPSVSAATHGGVKNPSFSQRRTSG. The Mn(2+) site is built by Asp-322 and Asp-333. Residues 441 to 450 show a composition bias toward low complexity; the sequence is GLSRQAISGS. The interval 441 to 460 is disordered; it reads GLSRQAISGSRRLPPPRNMK. Mn(2+) is bound by residues Glu-511 and Glu-552.

Belongs to the peptidase M24B family. The cofactor is Mn(2+).

It catalyses the reaction Release of any N-terminal amino acid, including proline, that is linked to proline, even from a dipeptide or tripeptide.. Its function is as follows. Catalyzes the removal of a penultimate prolyl residue from the N-termini of peptides. The protein is Probable Xaa-Pro aminopeptidase PEPP (PEPP) of Sordaria macrospora (strain ATCC MYA-333 / DSM 997 / K(L3346) / K-hell).